Here is a 346-residue protein sequence, read N- to C-terminus: 4-amino-5-hydroxymethyl-2-methylpyrimidine phosphate synthase (346 aa).

Lysine 62 is subject to N6-(pyridoxal phosphate)lysine. Residue histidine 66 is part of the active site. 114 to 117 (GEFG) contributes to the pyridoxal 5'-phosphate binding site. The CCCFC; essential for catalytic activity, may be the site of iron coordination signature appears at 194–198 (CCCFC).

Belongs to the NMT1/THI5 family. In terms of assembly, homodimer. The cofactor is Fe cation.

Its subcellular location is the cytoplasm. The protein localises to the nucleus. It carries out the reaction N(6)-(pyridoxal phosphate)-L-lysyl-[4-amino-5-hydroxymethyl-2-methylpyrimidine phosphate synthase] + L-histidyl-[4-amino-5-hydroxymethyl-2-methylpyrimidine phosphate synthase] + 2 Fe(3+) + 4 H2O = L-lysyl-[4-amino-5-hydroxymethyl-2-methylpyrimidine phosphate synthase] + (2S)-2-amino-5-hydroxy-4-oxopentanoyl-[4-amino-5-hydroxymethyl-2-methylpyrimidine phosphate synthase] + 4-amino-2-methyl-5-(phosphooxymethyl)pyrimidine + 3-oxopropanoate + 2 Fe(2+) + 2 H(+). It functions in the pathway cofactor biosynthesis; thiamine diphosphate biosynthesis. Its function is as follows. Responsible for the formation of the pyrimidine heterocycle in the thiamine biosynthesis pathway. Catalyzes the formation of hydroxymethylpyrimidine phosphate (HMP-P) from histidine and pyridoxal phosphate (PLP). The protein uses PLP and the active site histidine to form HMP-P, generating an inactive enzyme. The enzyme can only undergo a single turnover, which suggests it is a suicide enzyme. The polypeptide is 4-amino-5-hydroxymethyl-2-methylpyrimidine phosphate synthase (Schizosaccharomyces pombe (strain 972 / ATCC 24843) (Fission yeast)).